Here is a 190-residue protein sequence, read N- to C-terminus: dCTP deaminase, dUMP-forming (190 aa).

DCTP is bound by residues 101-106 (KSSLGR), Asp119, 127-129 (TLE), Gln148, Tyr162, and Gln174. Glu129 (proton donor/acceptor) is an active-site residue. Positions 161 to 190 (PYGSSGVGSKYQGQRGPTPSRSYQNFIRST) are disordered. Over residues 171-190 (YQGQRGPTPSRSYQNFIRST) the composition is skewed to polar residues.

Belongs to the dCTP deaminase family. As to quaternary structure, homotrimer.

The catalysed reaction is dCTP + 2 H2O = dUMP + NH4(+) + diphosphate. It participates in pyrimidine metabolism; dUMP biosynthesis; dUMP from dCTP: step 1/1. In terms of biological role, bifunctional enzyme that catalyzes both the deamination of dCTP to dUTP and the hydrolysis of dUTP to dUMP without releasing the toxic dUTP intermediate. This Mycobacterium ulcerans (strain Agy99) protein is dCTP deaminase, dUMP-forming.